A 241-amino-acid polypeptide reads, in one-letter code: Biosynthetic peptidoglycan transglycosylase (241 aa).

The helical transmembrane segment at 18 to 38 (GVIGIIALWMAGILIFAFLPV) threads the bilayer.

The protein belongs to the glycosyltransferase 51 family.

It localises to the cell inner membrane. It carries out the reaction [GlcNAc-(1-&gt;4)-Mur2Ac(oyl-L-Ala-gamma-D-Glu-L-Lys-D-Ala-D-Ala)](n)-di-trans,octa-cis-undecaprenyl diphosphate + beta-D-GlcNAc-(1-&gt;4)-Mur2Ac(oyl-L-Ala-gamma-D-Glu-L-Lys-D-Ala-D-Ala)-di-trans,octa-cis-undecaprenyl diphosphate = [GlcNAc-(1-&gt;4)-Mur2Ac(oyl-L-Ala-gamma-D-Glu-L-Lys-D-Ala-D-Ala)](n+1)-di-trans,octa-cis-undecaprenyl diphosphate + di-trans,octa-cis-undecaprenyl diphosphate + H(+). Its pathway is cell wall biogenesis; peptidoglycan biosynthesis. In terms of biological role, peptidoglycan polymerase that catalyzes glycan chain elongation from lipid-linked precursors. The chain is Biosynthetic peptidoglycan transglycosylase from Yersinia pseudotuberculosis serotype O:1b (strain IP 31758).